Consider the following 251-residue polypeptide: Phosphate import ATP-binding protein PstB 2 (251 aa).

The region spanning 5–246 (ITSKDVHLSY…PKKQITSDYL (242 aa)) is the ABC transporter domain. 37–44 (GPSGCGKS) provides a ligand contact to ATP.

The protein belongs to the ABC transporter superfamily. Phosphate importer (TC 3.A.1.7) family. As to quaternary structure, the complex is composed of two ATP-binding proteins (PstB), two transmembrane proteins (PstC and PstA) and a solute-binding protein (PstS).

Its subcellular location is the cell membrane. The catalysed reaction is phosphate(out) + ATP + H2O = ADP + 2 phosphate(in) + H(+). Its function is as follows. Part of the ABC transporter complex PstSACB involved in phosphate import. Responsible for energy coupling to the transport system. The polypeptide is Phosphate import ATP-binding protein PstB 2 (Lactobacillus johnsonii (strain CNCM I-12250 / La1 / NCC 533)).